Consider the following 300-residue polypeptide: HTH-type transcriptional regulator ArgP (300 aa).

Positions 4-60 (PDYRTLQALDAVIRERGFERAAQKLCITQSAVSQRIKQLENLFGQPLLVRTVPPRPT) constitute an HTH lysR-type domain. Residues 21–40 (FERAAQKLCITQSAVSQRIK) constitute a DNA-binding region (H-T-H motif).

Belongs to the LysR transcriptional regulatory family. In terms of assembly, homodimer.

In terms of biological role, controls the transcription of genes involved in arginine and lysine metabolism. The sequence is that of HTH-type transcriptional regulator ArgP from Photorhabdus laumondii subsp. laumondii (strain DSM 15139 / CIP 105565 / TT01) (Photorhabdus luminescens subsp. laumondii).